Consider the following 64-residue polypeptide: Large ribosomal subunit protein bL35 (64 aa).

It belongs to the bacterial ribosomal protein bL35 family.

This is Large ribosomal subunit protein bL35 from Mycoplasmopsis pulmonis (strain UAB CTIP) (Mycoplasma pulmonis).